A 282-amino-acid polypeptide reads, in one-letter code: uncharacterized protein (282 aa).

Tyr-50 functions as the Proton donor in the catalytic mechanism. His-115 lines the substrate pocket.

Belongs to the aldo/keto reductase family.

This is an uncharacterized protein from Saccharomyces cerevisiae (strain ATCC 204508 / S288c) (Baker's yeast).